The chain runs to 357 residues: LINE-1 retrotransposable element ORF1 protein (357 aa).

The disordered stretch occupies residues 1 to 40 (MAKGKRKNPTNRNQDHSPSSERSTPTPPSPGHPNTTENLD). The stretch at 59–156 (HKSLKDLQES…IENIDTTVKE (98 aa)) forms a coiled coil. The RNA recognition motif (RRM) domain stretch occupies residues 179–274 (NLRIIGIDEN…KGRPIRITPD (96 aa)). Residues 278-339 (ETMKARRAWT…STNPALQRII (62 aa)) are C-terminal domain (CTD).

It belongs to the transposase 22 family. In terms of assembly, homotrimer (via coiled coil domain). May also form larger homooligomers. Interacts with Tex19.1 and UBR2. Interacts with MOV10. Post-translationally, polyubiquitinated, probably by UBR2, which induces its degradation. As to expression, expressed in meiotic spermatocytes and in the cerebellum (at protein level).

The protein localises to the nucleus. The protein resides in the nucleolus. It localises to the cytoplasm. It is found in the cytoplasmic ribonucleoprotein granule. Its subcellular location is the stress granule. In terms of biological role, nucleic acid-binding protein which is essential for retrotransposition of LINE-1 elements in the genome. Functions as a nucleic acid chaperone binding its own transcript and therefore preferentially mobilizing the transcript from which they are encoded. The sequence is that of LINE-1 retrotransposable element ORF1 protein from Mus musculus (Mouse).